The primary structure comprises 2603 residues: MEKATVPAAAEGEGSPPAAAAVAAPPAAAAAEVGGGARPASSPRGMVRVCDLLLKKKPPQQQQQQQPPHHKAKRNRTCRPPSSSESSSDSDNSGGGGGGGGGGGGGTSSNNSEEEEDDDDEEEEVSEVESFILDQDDLENPMLETASKLLLSGTADGADLRTVDPETQARLEALLEAAGIGKLSTADGKAFADPEVLRRLTSSVSCALDEAAAALTRMRAESTANAGQSDNRSLAEACSEGDVNAVRKLLIEGRSVNEHTEEGESLLCLACSAGYYELAQVLLAMHANVEDRGIKGDITPLMAAANGGHVKIVKLLLAHKADVNAQSSTGNTALTYACAGGYVDVVKVLLESGASIEDHNENGHTPLMEAGSAGHVEVARLLLENGAGINTHSNEFKESALTLACYKGHLEMVRFLLEAGADQEHKTDEMHTALMEACMDGHVEVARLLLDSGAQVNMPADSFESPLTLAACGGHVELAALLIERGASLEEVNDEGYTPLMEAAREGHEEMVALLLGQGANINAQTEETQETALTLACCGGFLEVADFLIKAGADIELGCSTPLMEAAQEGHLELVKYLLAAGANVHATTATGDTALTYACENGHTDVADVLLQAGADLEHESEGGRTPLMKAARAGHVCTVQFLISKGANVNRTTANNDHTVLSLACAGGHLAVVELLLAHGADPTHRLKDGSTMLIEAAKGGHTSVVCYLLDYPNNLLAAPPPDVTQLTPPSHDLNRAPRVPVQALPMVVPPQEPDKPPANLAATLPVRSKAASKQKSNSHLPANSQDVQGYITNQSPESIVEEAQGKLTELEQRIKEAIEKNAQLQSLELAHADQLTKEKIEELNKTREEQIQKKQKILEELQKVERELQLKTQQQLKKQYLEVKAQRIQLQQQQQQSCQHLGLFTSVGVGEQLSEGDYARLQQVDPVLLKDEPQQTAAQMGFAPIQPLAMPQALPLATGPLPPGSIANLTELQGVIVGQPVLGQAQLAGLGQGILTETQQGLMVASPAQTLNDTLDDIMAAVSGRASAMSNTPTHSIAASVSQPQTPTPSPIISPSAMLPIYPAIDIDAQTESNHDTALTLACAGGHEELVQTLLERGASIEHRDKKGFTPLILAATAGHVGVVEILLDNGADIEAQSERTKDTPLSLACSGGRQEVVELLLARGANKEHRNVSDYTPLSLAASGGYVNIIKILLNAGAEINSRTGSKLGISPLMLAAMNGHTAAVKLLLDMGSDINAQIETNRNTALTLACFQGRTEVVSLLLDRKANVEHRAKTGLTPLMEAASGGYAEVGRVLLDKGADVNAPPVPSSRDTALTIAADKGHYKFCELLIGKGAHIDVRNKKGNTPLWLAANGGHLDVVQLLVQATADVDAADNRKITPLMAAFRKGHVKVVRYLVKEVNQFPSDSECMRYIATITDKEMLKKCHLCMESIVQAKDRQAAEANKNASILLEELDLEKLREESRRLALAAKREKRKEKRRKKKEEQRRKLEEIEAKNKENFELQAAQEKEKLKVEEEPEVLTEPPSATTTTTIGISATWTTLAGSHGKRNNTITTTSSKRKNRKNKITPENVQIIFDDPLPISYSQPEKVNGESKSSSTSESGDSDNMRISSCSDESSNSNSSRKSNNHASAVVTTTMASKKQPSVLVTFPKEERKSVSGKASIKLSETVNEGTSNSLSTCTKSGPSPLSSPNGKLTVASPKRGPKREEGWKEVVRRSKKVSVPSTVISRVIGRGGCNINAIRECTGAHIDIDKQKDKTGDRIITIRGGTESTRQATQLINALIKDPDKEIDELIPKNRLKSSTANSKIGSSAPTTTAANSSLMGIKMTTVALSSTSQTATALTVPAISSASTHKTIKNPVNNVRPGFPVSLPLAYPPPQFAHALLAAQTFQQIRPPRLPMTHFGGTFPPAQSTWGPFPVRPLSPARATNSPKPHMVPRHSNQNSSGSQVNSAGSLTSSPTTTASSSASAVPGTTSNGSPSSPSVRRQLFVTVVKTSNATTTTVTTTASNNSTAPTNATYPMPTAKEHYPVSSPSSPSPPAQPGGVSRNSPLDCGSASPNKGASASEQEASSPPVVEPANSRPPHSSSSSGSSSGHSTQQQPPGSVPQEPRPPLQQSQVPSPDVRMTVPPTATSSAPVAVPSTAPVTYPMPQTQMGCSQPPKMEAPAIRPPSHATAAPHKTPAPVQSSSASVLNVNHIKRPHSVPSSVQLPSTLSTQSACQNSVHPANKPVAPNFSAPLPFGPFSTLFENNPTNAHAFWGGPVVSSQSTPESMLSGKSSYLPNSDPLHQSDTSKAPGFRPPLQRPAPSPSGIVNMDTPYGSVTPSSTHLGNFASSLSGGQMYGPGAPLGGAPLGGAPTAANFNRQHFSPLSLLTPCSSASNESPAQSVSSGVRAPSPAPSSVPLGSEKPSSVSQDRKVPVPIGTERSARIRQTGTSAPSVIGSNLSTSVGHSGIWSFEGIGGNQDKVDWCNPGMGNPMIHRPMSDPGVFSQHQAMERDSTGIVTPSGTFHQHVPAGYMDFPKVGSMPFSVYGNAMLPPVAPIADGAGGPIFNGPHSAEPSWNSLIKMVSSSTENNGPQTVWTGPWAPHMNSVHMNQLG.

N-acetylmethionine is present on Met1. Residues 1-32 (MEKATVPAAAEGEGSPPAAAAVAAPPAAAAAE) show a composition bias toward low complexity. A disordered region spans residues 1–127 (MEKATVPAAA…DDDEEEEVSE (127 aa)). Phosphoserine is present on residues Ser15 and Ser42. Basic residues predominate over residues 68–77 (PHHKAKRNRT). Residues 82 to 92 (SSSESSSDSDN) are compositionally biased toward low complexity. Over residues 93 to 107 (SGGGGGGGGGGGGGT) the composition is skewed to gly residues. Residues 112 to 127 (SEEEEDDDDEEEEVSE) are compositionally biased toward acidic residues. Position 152 is a phosphoserine (Ser152). ANK repeat units lie at residues 229 to 258 (SDNR…SVNE), 262 to 291 (EGES…NVED), 296 to 325 (GDIT…DVNA), 329 to 358 (TGNT…SIED), 362 to 391 (NGHT…GINT), 396 to 425 (FKES…DQEH), 429 to 458 (EMHT…QVNM), 462 to 491 (SFES…SLEE), 495 to 524 (EGYT…NINA), 529 to 558 (TQET…DIEL), 559 to 588 (GCST…NVHA), 592 to 621 (TGDT…DLEH), 625 to 654 (GGRT…NVNR), 659 to 688 (NDHT…DPTH), and 692 to 721 (DGST…NLLA). Lys314 is covalently cross-linked (Glycyl lysine isopeptide (Lys-Gly) (interchain with G-Cter in SUMO2)). Residues 770 to 792 (VRSKAASKQKSNSHLPANSQDVQ) form a disordered region. The span at 775–792 (ASKQKSNSHLPANSQDVQ) shows a compositional bias: polar residues. A Phosphoserine modification is found at Ser799. ANK repeat units follow at residues 1078-1107 (NHDT…SIEH), 1111-1140 (KGFT…DIEA), 1145-1174 (TKDT…NKEH), 1178-1207 (SDYT…EINS), 1213-1242 (LGIS…DINA), 1247-1276 (NRNT…NVEH), 1280-1309 (TGLT…DVNA), 1315-1344 (SRDT…HIDV), 1348-1377 (KGNT…DVDA), and 1381-1410 (RKIT…QFPS). A coiled-coil region spans residues 1438-1522 (VQAKDRQAAE…EKEKLKVEEE (85 aa)). A Phosphoserine modification is found at Ser1453. 2 disordered regions span residues 1475-1496 (AKRE…RKLE) and 1513-1713 (EKEK…PKRE). A compositionally biased stretch (basic residues) spans 1477 to 1487 (REKRKEKRRKK). Low complexity-rich tracts occupy residues 1526 to 1546 (LTEP…TWTT), 1598 to 1607 (ESKSSSTSES), and 1616 to 1636 (SSCS…NHAS). Ser1631 is modified (phosphoserine). Polar residues-rich tracts occupy residues 1638-1648 (VVTTTMASKKQ) and 1671-1699 (LSET…SPNG). Phosphoserine is present on residues Ser1692, Ser1696, and Ser1705. Positions 1721–1785 (RRSKKVSVPS…ESTRQATQLI (65 aa)) constitute a KH domain. Arg1870 bears the Asymmetric dimethylarginine mark. Disordered stretches follow at residues 1902–1991 (PRLP…PSVR), 2007–2195 (TTVT…SSSA), and 2269–2327 (VSSQ…YGSV). Low complexity-rich tracts occupy residues 1946–1989 (SNQN…SSPS) and 2007–2024 (TTVT…TNAT). Ser2038, Ser2040, Ser2041, Ser2043, Ser2055, and Ser2063 each carry phosphoserine. Low complexity-rich tracts occupy residues 2068 to 2077 (ASASEQEASS), 2087 to 2108 (RPPH…QQPP), and 2175 to 2189 (PPSH…TPAP). Residues 2269-2298 (VSSQSTPESMLSGKSSYLPNSDPLHQSDTS) are compositionally biased toward polar residues. Residues 2303–2313 (FRPPLQRPAPS) are compositionally biased toward pro residues. Ser2373 is modified (phosphoserine). Residues 2378-2447 (LTPCSSASNE…TGTSAPSVIG (70 aa)) are disordered. The segment covering 2379 to 2391 (TPCSSASNESPAQ) has biased composition (polar residues). Residues 2392-2411 (SVSSGVRAPSPAPSSVPLGS) are compositionally biased toward low complexity. Ser2401 carries the phosphoserine modification. Over residues 2435-2447 (IRQTGTSAPSVIG) the composition is skewed to polar residues.

Interacts (via N-terminus) with NOD2. Interacts with CDK2, MCM3, MCM5, MCM7, CDC6 and PCNA. Interacts with MAVS and IFIH1. Interacts (via the second ankyrin repeat cluster) with RIGI. In terms of processing, phosphorylated by CDK2. Highly expressed in fetal liver. Detected in adult liver cells, ovarian oocytes, seminiferous tubules of the testes and pelvic region of the kidney. It was not detected in heart, gut, lung, spleen and skeletal muscle. Earliest specific in situ marker of hepatic differentiation during embryogenesis, useful for characterization of inductive events involved in hepatic specification.

It is found in the cytoplasm. The protein resides in the nucleus. Functionally, could play pivotal roles in cell cycle and DNA regulation. Involved in innate immune defense against viruse by positively regulating the viral dsRNA receptors RIGI and IFIH1 signaling pathways. Involves in NOD2- and NOD1-mediated responses to bacteria suggesting a role in innate antibacterial immune pathways too. Could play a central role for the formation and/or maintenance of the blood vessels of the circulation system. This is Ankyrin repeat domain-containing protein 17 (Ankrd17) from Mus musculus (Mouse).